The following is a 391-amino-acid chain: Testis-expressed protein 9 (391 aa).

Disordered stretches follow at residues 1–31 (MAGR…PGPD) and 65–85 (QEVR…EDDY). The stretch at 188-351 (IGTEAQIRFL…EKQKGELMIG (164 aa)) forms a coiled coil.

It localises to the cytoplasm. It is found in the cytoskeleton. Its subcellular location is the microtubule organizing center. The protein resides in the centrosome. The protein localises to the centriolar satellite. The protein is Testis-expressed protein 9 (TEX9) of Homo sapiens (Human).